The chain runs to 373 residues: RNA 3'-terminal phosphate cyclase-like protein (373 aa).

This sequence belongs to the RNA 3'-terminal cyclase family. Type 2 subfamily. As to quaternary structure, part of the small subunit (SSU) processome, composed of more than 70 proteins and the RNA chaperone small nucleolar RNA (snoRNA) U3. Interacts with BMS1.

The protein localises to the nucleus. It is found in the nucleolus. Its function is as follows. As part of the small subunit (SSU) processome, it plays a role in 40S-ribosomal-subunit biogenesis in the early pre-rRNA processing steps at sites A0, A1 and A2 that are required for proper maturation of the 18S RNA. Activates BMS1 by promoting GDP/GTP exchange. Does not have cyclase activity. The sequence is that of RNA 3'-terminal phosphate cyclase-like protein (Rcl1) from Mus musculus (Mouse).